Here is a 279-residue protein sequence, read N- to C-terminus: MEPKQRVVKPLKERVLPVVKNTQFVWFSGQVIVLISSVLYALQAIPFRSAPPFLFKSAAFGAIVAYAIVLYKTYSPNLTSRASWNKHFFARLMLDDNVQYFILALSMLIDRPILFSLAPYAIYATFHISTYLRSVLLPAIYPNISDAKTASYASRVSNLLNQYTRSQFQPAMQLVASLETFLLFRLFFGVFLRKNSISRLVGYIFFLRMRYTNSHFTRASIKAVSLRMDRLVADNRVPPVIKNAWHTFKTYVSKFGASPVGTAQSRPTASSSTTAPSST.

2 consecutive transmembrane segments (helical) span residues V25 to I45 and A50 to L70. N-linked (GlcNAc...) asparagine glycosylation occurs at N77. Residues Y100 to I122 form a helical membrane-spanning segment. An N-linked (GlcNAc...) asparagine glycan is attached at N143. A helical transmembrane segment spans residues M172 to L192. Residues V260–T279 form a disordered region. Over residues T262–T279 the composition is skewed to low complexity.

The protein belongs to the PER33/POM33 family. As to quaternary structure, interacts with RTN1 and YOP1.

The protein localises to the golgi apparatus membrane. Its subcellular location is the endoplasmic reticulum membrane. It is found in the nucleus membrane. Its function is as follows. Required for the correct positioning of the cellular division plane by delimiting the actomyosin ring assembly at the cell equator. This chain is Tetra-spanning protein 1 (tts1), found in Schizosaccharomyces pombe (strain 972 / ATCC 24843) (Fission yeast).